A 256-amino-acid chain; its full sequence is MLIIPAIDIKDGKCVRLTRGDFSQQKIYLDNPLDMAIIWRKQNAKMLHIVDLDAALTGEMVNFDIIANIVAELDIPVQIGGGIRSIDAVKRYLDMGVGRVVIGSAAVTDPELVGELMKHWPASKIVVGIDAENGVPKIKGWTESSGMQDYELALRMKDMGVERIVYTDISRDGMMQGFGYESTKRFAQKAGLKVTASGGVTNSEDLQRLATLRPYGVDSVIIGKAFYECNFPCQELWYNFEKGICLDQNFSTARRK.

The Proton acceptor role is filled by D8. The active-site Proton donor is the D130.

It belongs to the HisA/HisF family.

Its subcellular location is the cytoplasm. It carries out the reaction 1-(5-phospho-beta-D-ribosyl)-5-[(5-phospho-beta-D-ribosylamino)methylideneamino]imidazole-4-carboxamide = 5-[(5-phospho-1-deoxy-D-ribulos-1-ylimino)methylamino]-1-(5-phospho-beta-D-ribosyl)imidazole-4-carboxamide. It participates in amino-acid biosynthesis; L-histidine biosynthesis; L-histidine from 5-phospho-alpha-D-ribose 1-diphosphate: step 4/9. The polypeptide is 1-(5-phosphoribosyl)-5-[(5-phosphoribosylamino)methylideneamino] imidazole-4-carboxamide isomerase (Chlorobium phaeovibrioides (strain DSM 265 / 1930) (Prosthecochloris vibrioformis (strain DSM 265))).